The primary structure comprises 314 residues: Acetaldehyde dehydrogenase 2 (314 aa).

15 to 18 contributes to the NAD(+) binding site; it reads SGNI. The Acyl-thioester intermediate role is filled by cysteine 133. NAD(+)-binding positions include 164 to 172 and asparagine 291; that span reads SAGPGTRAN.

This sequence belongs to the acetaldehyde dehydrogenase family.

It carries out the reaction acetaldehyde + NAD(+) + CoA = acetyl-CoA + NADH + H(+). The chain is Acetaldehyde dehydrogenase 2 from Pseudomonas putida (strain ATCC 700007 / DSM 6899 / JCM 31910 / BCRC 17059 / LMG 24140 / F1).